The chain runs to 2032 residues: Transient receptor potential channel (2032 aa).

The span at 129–139 (KKTRKHRRRRS) shows a compositional bias: basic residues. Disordered stretches follow at residues 129-162 (KKTR…GHAI), 197-223 (QSKG…AVPT), 831-860 (KKAM…MGGV), 912-945 (ANPM…GSQT), and 1120-1211 (AAEH…EAGN). 3 stretches are compositionally biased toward polar residues: residues 839 to 855 (SRPS…QSTE), 935 to 945 (SLTSASDGSQT), and 1120 to 1129 (AAEHQNDMNY). The span at 1130-1149 (SSSSSSSSSSSSSSSSSDSS) shows a compositional bias: low complexity. Positions 1171 to 1185 (TSQGSAQSLNITSLF) are enriched in polar residues. 5 helical membrane-spanning segments follow: residues 1310-1330 (FWSW…TLLV), 1332-1352 (TPPR…AFGL), 1374-1394 (VCSF…VGFF), 1439-1459 (MIQN…SFGL), and 1535-1555 (LMTF…IAIF). Disordered regions lie at residues 1753–1779 (GTDP…RIRR), 1853–1909 (HPER…SRDQ), 1935–1982 (EEED…EEVD), and 1999–2032 (LNEE…CSDV). The span at 1935 to 1947 (EEEDEEEDDEEDD) shows a compositional bias: acidic residues. A compositionally biased stretch (basic residues) spans 1951–1962 (RHHIHPRRKSSR). A compositionally biased stretch (polar residues) spans 2016-2032 (SPSSSRADLTSQKCSDV).

Belongs to the transient receptor (TC 1.A.4) family. LTrpC subfamily. Gonads.

The protein localises to the membrane. Required for initiation and continuation of postembryonic mitotic cell divisions of gonadal cells Z1 and Z4. Zygotic expression is necessary for hermaphrodite fertility. May be a cation channel. This Caenorhabditis elegans protein is Transient receptor potential channel (gon-2).